A 428-amino-acid chain; its full sequence is 3-phosphoshikimate 1-carboxyvinyltransferase (428 aa).

The 3-phosphoshikimate site is built by Lys-21, Ser-22, and Arg-26. Lys-21 lines the phosphoenolpyruvate pocket. The phosphoenolpyruvate site is built by Gly-91 and Arg-119. Ser-164, Gln-166, Asp-313, and Lys-340 together coordinate 3-phosphoshikimate. Gln-166 is a phosphoenolpyruvate binding site. Catalysis depends on Asp-313, which acts as the Proton acceptor. Arg-344 and Arg-386 together coordinate phosphoenolpyruvate.

It belongs to the EPSP synthase family. In terms of assembly, monomer.

Its subcellular location is the cytoplasm. The enzyme catalyses 3-phosphoshikimate + phosphoenolpyruvate = 5-O-(1-carboxyvinyl)-3-phosphoshikimate + phosphate. It participates in metabolic intermediate biosynthesis; chorismate biosynthesis; chorismate from D-erythrose 4-phosphate and phosphoenolpyruvate: step 6/7. In terms of biological role, catalyzes the transfer of the enolpyruvyl moiety of phosphoenolpyruvate (PEP) to the 5-hydroxyl of shikimate-3-phosphate (S3P) to produce enolpyruvyl shikimate-3-phosphate and inorganic phosphate. The sequence is that of 3-phosphoshikimate 1-carboxyvinyltransferase from Campylobacter jejuni (strain RM1221).